Reading from the N-terminus, the 237-residue chain is Orotidine 5'-phosphate decarboxylase (237 aa).

Substrate-binding positions include D10, K32, 59 to 68, T118, R180, Q189, G209, and R210; that span reads DLKLHDIPNT. The active-site Proton donor is the K61.

It belongs to the OMP decarboxylase family. Type 1 subfamily. In terms of assembly, homodimer.

It carries out the reaction orotidine 5'-phosphate + H(+) = UMP + CO2. The protein operates within pyrimidine metabolism; UMP biosynthesis via de novo pathway; UMP from orotate: step 2/2. Catalyzes the decarboxylation of orotidine 5'-monophosphate (OMP) to uridine 5'-monophosphate (UMP). This Fusobacterium nucleatum subsp. nucleatum (strain ATCC 25586 / DSM 15643 / BCRC 10681 / CIP 101130 / JCM 8532 / KCTC 2640 / LMG 13131 / VPI 4355) protein is Orotidine 5'-phosphate decarboxylase.